Here is a 432-residue protein sequence, read N- to C-terminus: Pachytene checkpoint protein 2 homolog (432 aa).

The residue at position 1 (M1) is an N-acetylmethionine. Position 179–186 (179–186) interacts with ATP; that stretch reads GPPGTGKT.

It belongs to the AAA ATPase family. PCH2 subfamily. Specifically interacts with the ligand binding domain of the thyroid receptor (TR). This interaction does not require the presence of thyroid hormone for its interaction. Interacts with proteasome subunit PSMA8; to participate in meiosis progression during spermatogenesis. In terms of tissue distribution, widely expressed, including in testis.

Plays a key role in chromosome recombination and chromosome structure development during meiosis. Required at early steps in meiotic recombination that leads to non-crossovers pathways. Also needed for efficient completion of homologous synapsis by influencing crossover distribution along the chromosomes affecting both crossovers and non-crossovers pathways. Also required for development of higher-order chromosome structures and is needed for synaptonemal-complex formation. In males, required for efficient synapsis of the sex chromosomes and for sex body formation. Promotes early steps of the DNA double-strand breaks (DSBs) repair process upstream of the assembly of RAD51 complexes. Required for depletion of HORMAD1 and HORMAD2 from synapsed chromosomes. Plays a role in mitotic spindle assembly checkpoint (SAC) activation. In Mus musculus (Mouse), this protein is Pachytene checkpoint protein 2 homolog (Trip13).